A 221-amino-acid polypeptide reads, in one-letter code: Phosphoribosylformylglycinamidine synthase subunit PurQ (221 aa).

The Glutamine amidotransferase type-1 domain occupies 2-221; sequence KTAVIQFPGS…VFESLKTVKK (220 aa). The active-site Nucleophile is the cysteine 87. Active-site residues include histidine 195 and glutamate 197.

As to quaternary structure, part of the FGAM synthase complex composed of 1 PurL, 1 PurQ and 2 PurS subunits.

The protein resides in the cytoplasm. The catalysed reaction is N(2)-formyl-N(1)-(5-phospho-beta-D-ribosyl)glycinamide + L-glutamine + ATP + H2O = 2-formamido-N(1)-(5-O-phospho-beta-D-ribosyl)acetamidine + L-glutamate + ADP + phosphate + H(+). It carries out the reaction L-glutamine + H2O = L-glutamate + NH4(+). It functions in the pathway purine metabolism; IMP biosynthesis via de novo pathway; 5-amino-1-(5-phospho-D-ribosyl)imidazole from N(2)-formyl-N(1)-(5-phospho-D-ribosyl)glycinamide: step 1/2. Functionally, part of the phosphoribosylformylglycinamidine synthase complex involved in the purines biosynthetic pathway. Catalyzes the ATP-dependent conversion of formylglycinamide ribonucleotide (FGAR) and glutamine to yield formylglycinamidine ribonucleotide (FGAM) and glutamate. The FGAM synthase complex is composed of three subunits. PurQ produces an ammonia molecule by converting glutamine to glutamate. PurL transfers the ammonia molecule to FGAR to form FGAM in an ATP-dependent manner. PurS interacts with PurQ and PurL and is thought to assist in the transfer of the ammonia molecule from PurQ to PurL. The chain is Phosphoribosylformylglycinamidine synthase subunit PurQ from Deinococcus radiodurans (strain ATCC 13939 / DSM 20539 / JCM 16871 / CCUG 27074 / LMG 4051 / NBRC 15346 / NCIMB 9279 / VKM B-1422 / R1).